A 165-amino-acid chain; its full sequence is Coatomer subunit zeta (165 aa).

The protein belongs to the adaptor complexes small subunit family. In terms of assembly, oligomeric complex that consists of at least the alpha, beta, beta', gamma, delta, epsilon and zeta subunits.

It localises to the cytoplasm. The protein localises to the golgi apparatus membrane. The protein resides in the cytoplasmic vesicle. It is found in the COPI-coated vesicle membrane. Its function is as follows. The coatomer is a cytosolic protein complex that binds to dilysine motifs and reversibly associates with Golgi non-clathrin-coated vesicles, which further mediate biosynthetic protein transport from the ER, via the Golgi up to the trans Golgi network. Coatomer complex is required for budding from Golgi membranes, and is essential for the retrograde Golgi-to-ER transport of dilysine-tagged proteins. The zeta subunit may be involved in regulating the coat assembly and, hence, the rate of biosynthetic protein transport due to its association-dissociation properties with the coatomer complex. This chain is Coatomer subunit zeta, found in Encephalitozoon cuniculi (strain GB-M1) (Microsporidian parasite).